The sequence spans 468 residues: Tubulin gamma chain (468 aa).

Ala-142–Gly-148 is a GTP binding site.

The protein belongs to the tubulin family.

The protein resides in the cytoplasm. It localises to the cytoskeleton. Its subcellular location is the microtubule organizing center. Functionally, tubulin is the major constituent of microtubules. The gamma chain is found at microtubule organizing centers (MTOC) such as the spindle poles, suggesting that it is involved in the minus-end nucleation of microtubule assembly. This is Tubulin gamma chain (TUBG) from Chlamydomonas reinhardtii (Chlamydomonas smithii).